An 854-amino-acid polypeptide reads, in one-letter code: Arsenate respiratory reductase molybdopterin-containing subunit ArrA (854 aa).

The tat-type signal signal peptide spans 1-41; the sequence is MKKENQVNLGRRQLLKSTAAGTVLTGIGGTLSFTPIVEGIA. Positions 54–110 constitute a 4Fe-4S Mo/W bis-MGD-type domain; it reads GEWLATTCQGCTSWCAKQIYVMDGRALKVRGNPNSGVHGMSSCPRQHLSLQQVYDPD. 4 residues coordinate [4Fe-4S] cluster: Cys-61, Cys-64, Cys-68, and Cys-96. Arg-165 contacts arsenite. Tyr-166 contributes to the arsenate binding site. An arsenite-binding site is contributed by His-189. Arsenate is bound at residue Ser-190. Residue Cys-193 coordinates Mo-bis(molybdopterin guanine dinucleotide). Lys-198 contributes to the arsenate binding site. Position 210 (Tyr-210) interacts with arsenite.

This sequence belongs to the prokaryotic molybdopterin-containing oxidoreductase family. As to quaternary structure, heterodimer composed of one large subunit (ArrA) and one small subunit (ArrB). The cofactor is [4Fe-4S] cluster. Requires Mo-bis(molybdopterin guanine dinucleotide) as cofactor. Predicted to be exported by the Tat system. The position of the signal peptide cleavage has not been experimentally proven.

It localises to the periplasm. The catalysed reaction is arsenite + A + H2O = arsenate + AH2 + H(+). Phosphate is a competitive inhibitor. Functionally, component of the arsenate respiratory reductase (Arr) complex, which catalyzes the reduction of arsenate (As(V)) to arsenite (As(III)). ArrA is the arsenate-binding subunit. The periplasmic localization of this complex may allow the cell to couple arsenate reduction to energy production before arsenate can be transported to the cell cytoplasm and enter the ars detoxification pathway, an energy-requiring process. This Shewanella sp. (strain ANA-3) protein is Arsenate respiratory reductase molybdopterin-containing subunit ArrA.